The chain runs to 104 residues: Ig lambda-2 chain C region (104 aa).

One can recognise an Ig-like domain in the interval 6-99 (PTLTVFPPST…EGNTVEKSLS (94 aa)). An intrachain disulfide couples C27 to C85.

This chain is Ig lambda-2 chain C region, found in Rattus norvegicus (Rat).